The primary structure comprises 134 residues: DNA-directed RNA polymerase subunit omega (134 aa).

It belongs to the RNA polymerase subunit omega family. As to quaternary structure, the RNAP catalytic core consists of 2 alpha, 1 beta, 1 beta' and 1 omega subunit. When a sigma factor is associated with the core the holoenzyme is formed, which can initiate transcription.

The catalysed reaction is RNA(n) + a ribonucleoside 5'-triphosphate = RNA(n+1) + diphosphate. In terms of biological role, promotes RNA polymerase assembly. Latches the N- and C-terminal regions of the beta' subunit thereby facilitating its interaction with the beta and alpha subunits. The polypeptide is DNA-directed RNA polymerase subunit omega (Brucella anthropi (strain ATCC 49188 / DSM 6882 / CCUG 24695 / JCM 21032 / LMG 3331 / NBRC 15819 / NCTC 12168 / Alc 37) (Ochrobactrum anthropi)).